Consider the following 891-residue polypeptide: Longitudinals lacking protein, isoform G (891 aa).

The BTB domain occupies 32-97 (VDCTLAAEGK…MYRGEVNISQ (66 aa)). Disordered regions lie at residues 115 to 200 (LSDN…SSVL) and 228 to 340 (SSGP…ASAS). Residue Ser140 is modified to Phosphoserine. At Thr161 the chain carries Phosphothreonine. Phosphoserine is present on residues Ser162 and Ser168. Low complexity-rich tracts occupy residues 162-175 (SGDVSGSREGSSSP), 228-251 (SSGPAAGTSSQASSTQQQQPLTST), 263-293 (TSSTAAPASGASASAAVQQAHLHQQQAQTTS), and 329-340 (NSATGPNPASAS). Ser372, Ser375, and Ser378 each carry phosphoserine. The disordered stretch occupies residues 446–467 (QDAQQRDPQDLSRKENTAPDVA). Over residues 449-462 (QQRDPQDLSRKENT) the composition is skewed to basic and acidic residues. Ser696 and Ser705 each carry phosphoserine. Thr706 is modified (phosphothreonine). Residues Ser749 and Ser750 each carry the phosphoserine modification. Residues 791–813 (YECRHCGKKYRWKSTLRRHENVE) form a C2H2-type 1; degenerate zinc finger. Residues 821 to 843 (HQCPYCPYKSKQRGNLGVHVRKH) form a C2H2-type 2 zinc finger. The disordered stretch occupies residues 840–891 (VRKHHTDLPQLPSKRRSKYSMNRENGMSGSMSDDSQGKLIIDFNGKGELETK). Position 874 is a phosphoserine (Ser874).

In terms of tissue distribution, expressed in both mesoderm and ectoderm with expression highest in the mesectoderm by stage 11. Becomes enriched in a cluster of brain cells, in abdominal histoblasts, and in the embryonic imaginal disks during later stages.

It localises to the nucleus. Putative transcription factor required for axon growth and guidance in the central and peripheral nervous systems. Repels CNS axons away from the midline by promoting the expression of the midline repellent sli and its receptor robo. The sequence is that of Longitudinals lacking protein, isoform G from Drosophila melanogaster (Fruit fly).